Here is a 566-residue protein sequence, read N- to C-terminus: MDIKRTILIVALAIVSYVMVLKWNQDYGQAALPTQNVASSTTAPGLPDAPTGTSAANDDIPRAASDTTAPAEAPVAASKDLIQIKTDVLDLAVDPQGGDIAQLRLPLYPRRQDHPEIPFQLFDNGNERTYLAQSGLIGSNGPDASPAGRPIYSAEKKSYQLADGQDQLVVDLKFSKDGVNYIKRFTLKRGLYDITVSYLIDNESAQPWTGAMFAQLKRDASSDPSSSTATGTATYLGAALWTSSEPYKKVSMKDMDKVNEDKSKAPITENVQGGWVAWLQHYFVTAWIPPKGENNQVLARKDSKGNYIIGYTGPSMTVAPGAKAETSAILYAGPKSQAVLKELSPGLELTVDYGFLWFIAQPIFWLLQHIHSLVGNWGWSIIFLTMLIKGIFFPLSAASYKSMARMRAVAPKLAALKEKFGDDRQKMSQAMMELYKKEKINPLGGCLPILVQMPVFLSLYWVLLESVEMRQAPFMLWITDLSIKDPFFILPIIMGATMFIQQQLNPTPPDPMQAKVMKMMPIIFTFFFLWFPAGLVLYWVVNNCLSIAQQWYITRKIEAATKKAAA.

The chain crosses the membrane as a helical span at residues 7–27; sequence ILIVALAIVSYVMVLKWNQDY. The tract at residues 38-72 is disordered; sequence ASSTTAPGLPDAPTGTSAANDDIPRAASDTTAPAE. The next 5 membrane-spanning stretches (helical) occupy residues 347-367, 373-393, 443-463, 474-494, and 521-541; these read LELT…FWLL, LVGN…GIFF, LGGC…YWVL, FMLW…PIIM, and PIIF…YWVV.

It belongs to the OXA1/ALB3/YidC family. Type 1 subfamily. In terms of assembly, interacts with the Sec translocase complex via SecD. Specifically interacts with transmembrane segments of nascent integral membrane proteins during membrane integration.

The protein resides in the cell inner membrane. Functionally, required for the insertion and/or proper folding and/or complex formation of integral membrane proteins into the membrane. Involved in integration of membrane proteins that insert both dependently and independently of the Sec translocase complex, as well as at least some lipoproteins. Aids folding of multispanning membrane proteins. The protein is Membrane protein insertase YidC of Pseudomonas fluorescens (strain ATCC BAA-477 / NRRL B-23932 / Pf-5).